A 358-amino-acid chain; its full sequence is Starch-binding domain-containing protein 1 (358 aa).

Topologically, residues 1–6 (MGAVWS) are extracellular. A helical transmembrane segment spans residues 7 to 23 (ALLVGGGLAGALFVWLL). The Cytoplasmic portion of the chain corresponds to 24 to 358 (RGGPGDTGKD…KVVHAWWGIH (335 aa)). Residues 30 to 42 (TGKDGDAEQEKDA) are compositionally biased toward basic and acidic residues. Disordered stretches follow at residues 30–70 (TGKD…QELV) and 104–151 (SREV…SPMG). Positions 50–66 (PGGHQSGSSGLSPGPSG) are enriched in low complexity. S65 is subject to Phosphoserine. Positions 106-115 (EVCDNSREHV) are enriched in basic and acidic residues. A Phosphoserine modification is found at S117. The segment covering 126 to 140 (PATSETSNSRSYSEV) has biased composition (polar residues). A phosphoserine mark is found at S148, S175, S188, and S194. The short motif at 200-206 (HEEWEMV) is the LIR element. A phosphoserine mark is found at S210, S211, and S220. Residues 258-357 (PAGSQQVSVR…DKVVHAWWGI (100 aa)) form the CBM20 domain.

Interacts with the ATG8 family proteins GABARAP and GABARAPL1. Interacts with several glycogen-associated proteins, such as GYS2 (liver glycogen synthase), GDE (glycogen debranching enzyme), GBE1 (glycogen branching enzyme 1) and EPM2A (Laforin). Ubiquitinated, which leads to proteasomal degradation. Expressed at high level in skeletal and cardiac muscles. Moderately expressed in liver and placenta. No expression is found in pancreas, kidney or lung. Present in skeletal muscle, heart and placenta (at protein level).

It is found in the preautophagosomal structure membrane. The protein resides in the endoplasmic reticulum membrane. Its subcellular location is the cell membrane. It localises to the sarcolemma. The protein localises to the T-tubule. Its function is as follows. Acts as a cargo receptor for glycogen. Delivers its cargo to an autophagic pathway called glycophagy, resulting in the transport of glycogen to lysosomes. In Homo sapiens (Human), this protein is Starch-binding domain-containing protein 1.